A 272-amino-acid chain; its full sequence is Formamidopyrimidine-DNA glycosylase (272 aa).

Residue proline 2 is the Schiff-base intermediate with DNA of the active site. The Proton donor role is filled by glutamate 3. Lysine 58 (proton donor; for beta-elimination activity) is an active-site residue. The DNA site is built by histidine 93, arginine 112, and arginine 153. An FPG-type zinc finger spans residues 238–272 (HVYGKSGQHCPKCGNILEDLKISNRGTVYCPHCQR). Arginine 262 functions as the Proton donor; for delta-elimination activity in the catalytic mechanism.

This sequence belongs to the FPG family. As to quaternary structure, monomer. Zn(2+) is required as a cofactor.

The enzyme catalyses Hydrolysis of DNA containing ring-opened 7-methylguanine residues, releasing 2,6-diamino-4-hydroxy-5-(N-methyl)formamidopyrimidine.. The catalysed reaction is 2'-deoxyribonucleotide-(2'-deoxyribose 5'-phosphate)-2'-deoxyribonucleotide-DNA = a 3'-end 2'-deoxyribonucleotide-(2,3-dehydro-2,3-deoxyribose 5'-phosphate)-DNA + a 5'-end 5'-phospho-2'-deoxyribonucleoside-DNA + H(+). Its function is as follows. Involved in base excision repair of DNA damaged by oxidation or by mutagenic agents. Acts as a DNA glycosylase that recognizes and removes damaged bases. Has a preference for oxidized purines, such as 7,8-dihydro-8-oxoguanine (8-oxoG). Has AP (apurinic/apyrimidinic) lyase activity and introduces nicks in the DNA strand. Cleaves the DNA backbone by beta-delta elimination to generate a single-strand break at the site of the removed base with both 3'- and 5'-phosphates. This chain is Formamidopyrimidine-DNA glycosylase, found in Dichelobacter nodosus (strain VCS1703A).